The primary structure comprises 473 residues: MGQSGRSRHQKRARAQAQLRNLEAYAANPHSFVFTRGCTGRNIRQLSLDVRRVMEPLTASRLQVRKKNSLKDCVAVAGPLGVTHFLILSKTETNIYFKLMHLPGGPTLTFQVKKYSLVRDVVSSLRRHRMHEQQFAYPPLLVLNSFGPHGMHVKLMATMFQNLFPSINVHKVNLNTIKRCLLIDYNHDSQELDFRHYSIKVVPVGASRGMKKLLQEKFPNMSRLQDISELLATGAGLSESEAEPDGDHNITELPQAVAGRGNMRAQQSAVRLTEIGPRMTLQLIKVQEGVGEGKVMFHSFVRKTEEELQAILEAKEKKLRLKAQRQAQQAQNVQRKQEQREAHRKKSLEGMKKARVRGGDEEASGIPSRTASLGLGEDDDEQEDDDIEYFCQAVGEAPSEDLFPEAKRKRLAKSPGQKRKRREMDRGRGRLCDQKFPKPKDKSHGAQARRGPRGASQDGGRGQGRGRPRKRVA.

The 264-residue stretch at 29 to 292 (PHSFVFTRGC…LIKVQEGVGE (264 aa)) folds into the Brix domain. Phosphoserine occurs at positions 238 and 240. A disordered region spans residues 323 to 473 (AQRQAQQAQN…GRGRPRKRVA (151 aa)). Residues 324–334 (QRQAQQAQNVQ) are compositionally biased toward low complexity. Over residues 335–360 (RKQEQREAHRKKSLEGMKKARVRGGD) the composition is skewed to basic and acidic residues. A compositionally biased stretch (acidic residues) spans 376-388 (GEDDDEQEDDDIE). The span at 407–421 (KRKRLAKSPGQKRKR) shows a compositional bias: basic residues. Positions 422–444 (REMDRGRGRLCDQKFPKPKDKSH) are enriched in basic and acidic residues. Lysine 438 bears the N6-acetyllysine mark. The segment covering 464-473 (GRGRPRKRVA) has biased composition (basic residues).

Its subcellular location is the nucleus. It localises to the nucleolus. May have a role in cell growth. The polypeptide is Suppressor of SWI4 1 homolog (PPAN) (Pongo abelii (Sumatran orangutan)).